The chain runs to 719 residues: DNA ligase (719 aa).

Residues 42 to 46 (DAAYD), 92 to 93 (SL), and E126 contribute to the NAD(+) site. Catalysis depends on K128, which acts as the N6-AMP-lysine intermediate. 4 residues coordinate NAD(+): R149, E185, K301, and K325. C430, C433, C448, and C454 together coordinate Zn(2+). The BRCT domain occupies 640–719 (ATGSPVEGKT…DDWFKLVGED (80 aa)).

The protein belongs to the NAD-dependent DNA ligase family. LigA subfamily. Requires Mg(2+) as cofactor. Mn(2+) serves as cofactor.

It catalyses the reaction NAD(+) + (deoxyribonucleotide)n-3'-hydroxyl + 5'-phospho-(deoxyribonucleotide)m = (deoxyribonucleotide)n+m + AMP + beta-nicotinamide D-nucleotide.. In terms of biological role, DNA ligase that catalyzes the formation of phosphodiester linkages between 5'-phosphoryl and 3'-hydroxyl groups in double-stranded DNA using NAD as a coenzyme and as the energy source for the reaction. It is essential for DNA replication and repair of damaged DNA. The sequence is that of DNA ligase from Brucella melitensis biotype 2 (strain ATCC 23457).